We begin with the raw amino-acid sequence, 354 residues long: Ribosomal RNA large subunit methyltransferase M (354 aa).

S-adenosyl-L-methionine is bound by residues Ser183, 216–219 (SPGG), Asp235, Asp255, and Asp271. The Proton acceptor role is filled by Lys300.

This sequence belongs to the class I-like SAM-binding methyltransferase superfamily. RNA methyltransferase RlmE family. RlmM subfamily. Monomer.

It localises to the cytoplasm. The enzyme catalyses cytidine(2498) in 23S rRNA + S-adenosyl-L-methionine = 2'-O-methylcytidine(2498) in 23S rRNA + S-adenosyl-L-homocysteine + H(+). In terms of biological role, catalyzes the 2'-O-methylation at nucleotide C2498 in 23S rRNA. This Pseudomonas entomophila (strain L48) protein is Ribosomal RNA large subunit methyltransferase M.